We begin with the raw amino-acid sequence, 82 residues long: Sec-independent protein translocase protein TatA (82 aa).

Residues 1–21 (MGGISIWQLLIIAVIIVLLFG) form a helical membrane-spanning segment. The disordered stretch occupies residues 46-82 (DEPAKDAKKDADFVPQNLEKKEAETVEKQKQNDKEQA).

This sequence belongs to the TatA/E family. The Tat system comprises two distinct complexes: a TatABC complex, containing multiple copies of TatA, TatB and TatC subunits, and a separate TatA complex, containing only TatA subunits. Substrates initially bind to the TatABC complex, which probably triggers association of the separate TatA complex to form the active translocon.

The protein resides in the cell inner membrane. In terms of biological role, part of the twin-arginine translocation (Tat) system that transports large folded proteins containing a characteristic twin-arginine motif in their signal peptide across membranes. TatA could form the protein-conducting channel of the Tat system. This is Sec-independent protein translocase protein TatA from Aliivibrio fischeri (strain MJ11) (Vibrio fischeri).